Reading from the N-terminus, the 312-residue chain is ECF RNA polymerase sigma factor SigJ (312 aa).

The tract at residues 6–65 (FEALRQHLMSVAYRLTGTVADAEDIVQEAWLRWDSPDTVIADPRAWLTTVVSRLGLDKLR) is sigma-70 factor domain-2. The Polymerase core binding signature appears at 29-32 (DIVQ). The interval 107 to 155 (MVVLERLRPDQRVAFVLHDGFAVPFAEVAEVLGTSEAAARQLASRARKA) is sigma-70 factor domain-4. Residues 131–150 (FAEVAEVLGTSEAAARQLAS) constitute a DNA-binding region (H-T-H motif). Residues 293–312 (GSPLKERRAQPTGRGRHHRN) form a disordered region.

It belongs to the sigma-70 factor family. ECF subfamily. In terms of assembly, interacts transiently with the RNA polymerase catalytic core formed by RpoA, RpoB, RpoC and RpoZ (2 alpha, 1 beta, 1 beta' and 1 omega subunit) to form the RNA polymerase holoenzyme that can initiate transcription.

Sigma factors are initiation factors that promote the attachment of RNA polymerase to specific initiation sites and are then released. Extracytoplasmic function (ECF) sigma factors are held in an inactive form by an anti-sigma factor until released, although no anti-sigma factor is known for this protein. Regulates the promoter of SigI, may not be autoregulated. The polypeptide is ECF RNA polymerase sigma factor SigJ (sigJ) (Mycobacterium tuberculosis (strain ATCC 25618 / H37Rv)).